The primary structure comprises 299 residues: ATP phosphoribosyltransferase (299 aa).

It belongs to the ATP phosphoribosyltransferase family. Long subfamily. Equilibrium between an active dimeric form, an inactive hexameric form and higher aggregates. Interconversion between the various forms is largely reversible and is influenced by the natural substrates and inhibitors of the enzyme. The cofactor is Mg(2+).

The protein resides in the cytoplasm. The enzyme catalyses 1-(5-phospho-beta-D-ribosyl)-ATP + diphosphate = 5-phospho-alpha-D-ribose 1-diphosphate + ATP. It participates in amino-acid biosynthesis; L-histidine biosynthesis; L-histidine from 5-phospho-alpha-D-ribose 1-diphosphate: step 1/9. With respect to regulation, feedback inhibited by histidine. In terms of biological role, catalyzes the condensation of ATP and 5-phosphoribose 1-diphosphate to form N'-(5'-phosphoribosyl)-ATP (PR-ATP). Has a crucial role in the pathway because the rate of histidine biosynthesis seems to be controlled primarily by regulation of HisG enzymatic activity. The polypeptide is ATP phosphoribosyltransferase (Pectobacterium atrosepticum (strain SCRI 1043 / ATCC BAA-672) (Erwinia carotovora subsp. atroseptica)).